The chain runs to 121 residues: uncharacterized protein (121 aa).

The disordered stretch occupies residues 20–98; the sequence is NEVRTSQSEV…PYYHGSKAST (79 aa). Positions 35–51 are enriched in basic and acidic residues; the sequence is KKSDNGEKDEKEEKELN.

This is an uncharacterized protein from Invertebrate iridescent virus 6 (IIV-6).